We begin with the raw amino-acid sequence, 255 residues long: Triosephosphate isomerase (255 aa).

Asn-9–Lys-11 serves as a coordination point for substrate. The active-site Electrophile is the His-95. The Proton acceptor role is filled by Glu-167. Substrate contacts are provided by residues Gly-173, Ser-212, and Gly-233–Gly-234.

Belongs to the triosephosphate isomerase family. In terms of assembly, homodimer.

Its subcellular location is the cytoplasm. The catalysed reaction is D-glyceraldehyde 3-phosphate = dihydroxyacetone phosphate. It functions in the pathway carbohydrate biosynthesis; gluconeogenesis. The protein operates within carbohydrate degradation; glycolysis; D-glyceraldehyde 3-phosphate from glycerone phosphate: step 1/1. Functionally, involved in the gluconeogenesis. Catalyzes stereospecifically the conversion of dihydroxyacetone phosphate (DHAP) to D-glyceraldehyde-3-phosphate (G3P). The protein is Triosephosphate isomerase of Klebsiella pneumoniae.